Consider the following 288-residue polypeptide: Urease accessory protein UreD 1 (288 aa).

Over residues 1–10 (MHGPLAPAPS) the composition is skewed to pro residues. The segment at 1-35 (MHGPLAPAPSPERLGAAPARQRSDGRIRLRVGPAR) is disordered.

This sequence belongs to the UreD family. UreD, UreF and UreG form a complex that acts as a GTP-hydrolysis-dependent molecular chaperone, activating the urease apoprotein by helping to assemble the nickel containing metallocenter of UreC. The UreE protein probably delivers the nickel.

It is found in the cytoplasm. Functionally, required for maturation of urease via the functional incorporation of the urease nickel metallocenter. The chain is Urease accessory protein UreD 1 from Methylobacterium radiotolerans (strain ATCC 27329 / DSM 1819 / JCM 2831 / NBRC 15690 / NCIMB 10815 / 0-1).